A 131-amino-acid chain; its full sequence is Translation initiation factor 5A (131 aa).

Lysine 36 is subject to Hypusine.

This sequence belongs to the eIF-5A family.

It localises to the cytoplasm. Functionally, functions by promoting the formation of the first peptide bond. The protein is Translation initiation factor 5A of Saccharolobus solfataricus (strain ATCC 35092 / DSM 1617 / JCM 11322 / P2) (Sulfolobus solfataricus).